Reading from the N-terminus, the 359-residue chain is Phospho-N-acetylmuramoyl-pentapeptide-transferase (359 aa).

10 consecutive transmembrane segments (helical) span residues 23 to 43 (VAFF…IKWA), 68 to 88 (MGGI…GNLF), 92 to 112 (VLLG…DDYM), 126 to 146 (MKFF…LYIG), 165 to 185 (AFKI…VFLA), 198 to 218 (GLAT…VYVA), 235 to 255 (SGEL…FLWY), 262 to 282 (VFMG…MAIV), 287 to 307 (ILLL…ILQV), and 336 to 356 (KIIV…LLSL).

It belongs to the glycosyltransferase 4 family. MraY subfamily. Requires Mg(2+) as cofactor.

It is found in the cell inner membrane. It catalyses the reaction UDP-N-acetyl-alpha-D-muramoyl-L-alanyl-gamma-D-glutamyl-meso-2,6-diaminopimeloyl-D-alanyl-D-alanine + di-trans,octa-cis-undecaprenyl phosphate = di-trans,octa-cis-undecaprenyl diphospho-N-acetyl-alpha-D-muramoyl-L-alanyl-D-glutamyl-meso-2,6-diaminopimeloyl-D-alanyl-D-alanine + UMP. Its pathway is cell wall biogenesis; peptidoglycan biosynthesis. Functionally, catalyzes the initial step of the lipid cycle reactions in the biosynthesis of the cell wall peptidoglycan: transfers peptidoglycan precursor phospho-MurNAc-pentapeptide from UDP-MurNAc-pentapeptide onto the lipid carrier undecaprenyl phosphate, yielding undecaprenyl-pyrophosphoryl-MurNAc-pentapeptide, known as lipid I. In Helicobacter hepaticus (strain ATCC 51449 / 3B1), this protein is Phospho-N-acetylmuramoyl-pentapeptide-transferase.